The following is a 179-amino-acid chain: Large ribosomal subunit protein uL6 (179 aa).

This sequence belongs to the universal ribosomal protein uL6 family. Part of the 50S ribosomal subunit.

This protein binds to the 23S rRNA, and is important in its secondary structure. It is located near the subunit interface in the base of the L7/L12 stalk, and near the tRNA binding site of the peptidyltransferase center. The polypeptide is Large ribosomal subunit protein uL6 (Geobacter metallireducens (strain ATCC 53774 / DSM 7210 / GS-15)).